The following is a 244-amino-acid chain: tRNA pseudouridine synthase A (244 aa).

The active-site Nucleophile is the aspartate 52. Tyrosine 110 serves as a coordination point for substrate.

This sequence belongs to the tRNA pseudouridine synthase TruA family. As to quaternary structure, homodimer.

The enzyme catalyses uridine(38/39/40) in tRNA = pseudouridine(38/39/40) in tRNA. Formation of pseudouridine at positions 38, 39 and 40 in the anticodon stem and loop of transfer RNAs. The sequence is that of tRNA pseudouridine synthase A from Caldicellulosiruptor bescii (strain ATCC BAA-1888 / DSM 6725 / KCTC 15123 / Z-1320) (Anaerocellum thermophilum).